The sequence spans 131 residues: ER membrane protein complex subunit 5 (131 aa).

The Cytoplasmic segment spans residues 1–3 (MAP). Residues 4–22 (SLWKGLVGVGLFALAHAAF) traverse the membrane as a helical segment. The Lumenal segment spans residues 23-43 (SAAQHRSYMRLTEKEDESLPI). The chain crosses the membrane as a helical span at residues 44–63 (DIVLQTLLAFAVTCYGIVHI). The Cytoplasmic portion of the chain corresponds to 64–131 (AGEFKDMDAT…KLRKFDSLRR (68 aa)). At serine 120 the chain carries Phosphoserine.

This sequence belongs to the membrane magnesium transporter (TC 1.A.67) family. As to quaternary structure, component of the ER membrane protein complex (EMC). Abundant in heart muscle and kidney with lower levels in liver and brain and very little expression in intestine or colon. In kidney, highest levels in distal convoluted tubule.

The protein resides in the endoplasmic reticulum membrane. Its subcellular location is the golgi apparatus membrane. The protein localises to the early endosome membrane. Functionally, part of the endoplasmic reticulum membrane protein complex (EMC) that enables the energy-independent insertion into endoplasmic reticulum membranes of newly synthesized membrane proteins. Preferentially accommodates proteins with transmembrane domains that are weakly hydrophobic or contain destabilizing features such as charged and aromatic residues. Involved in the cotranslational insertion of multi-pass membrane proteins in which stop-transfer membrane-anchor sequences become ER membrane spanning helices. It is also required for the post-translational insertion of tail-anchored/TA proteins in endoplasmic reticulum membranes. By mediating the proper cotranslational insertion of N-terminal transmembrane domains in an N-exo topology, with translocated N-terminus in the lumen of the ER, controls the topology of multi-pass membrane proteins like the G protein-coupled receptors. By regulating the insertion of various proteins in membranes, it is indirectly involved in many cellular processes. May be involved Mg(2+) transport. The polypeptide is ER membrane protein complex subunit 5 (Mus musculus (Mouse)).